We begin with the raw amino-acid sequence, 1153 residues long: Error-prone DNA polymerase (1153 aa).

The tract at residues 1107–1153 (DELIAPSASTEREAPLNDDRRDHPDLPAQQIRHPRNVRILPPSRDFH) is disordered. The span at 1116 to 1131 (TEREAPLNDDRRDHPD) shows a compositional bias: basic and acidic residues.

Belongs to the DNA polymerase type-C family. DnaE2 subfamily.

The protein resides in the cytoplasm. It catalyses the reaction DNA(n) + a 2'-deoxyribonucleoside 5'-triphosphate = DNA(n+1) + diphosphate. DNA polymerase involved in damage-induced mutagenesis and translesion synthesis (TLS). It is not the major replicative DNA polymerase. In Rhodopseudomonas palustris (strain BisA53), this protein is Error-prone DNA polymerase.